The chain runs to 344 residues: Plastoglobule-localized metallopeptidase 48, chloroplastic (344 aa).

The N-terminal 47 residues, 1 to 47, are a transit peptide targeting the chloroplast; that stretch reads MAVSVSAPVLSLCYNQSGELSRSLGYRLPKKVGFSSGRRSVSYIGFG. 2 helical membrane-spanning segments follow: residues 102-122 and 169-189; these read LLGS…SVLV and FIVV…QAVL. Histidine 191 contributes to the Zn(2+) binding site. Glutamate 192 is an active-site residue. Histidine 195 serves as a coordination point for Zn(2+). The helical transmembrane segment at 201-221 threads the bilayer; the sequence is GVWLTFANILTLGAYTVPAFG. Glutamate 240 is a binding site for Zn(2+). A helical membrane pass occupies residues 256 to 272; sequence VVVSVLMKLAGGCPSIA.

Belongs to the peptidase M48 family. M48D subfamily. Interacts with plastoglobule (PG) core proteins ABC1K3, PES1 and CCD4. Zn(2+) serves as cofactor. As to expression, mostly expressed in flowers (e.g. sepals, petals and stamen), seeds, leaves and cotyledons.

The protein localises to the plastid. It is found in the chloroplast. Its subcellular location is the plastoglobule. The protein resides in the chloroplast membrane. Its function is as follows. Metalloendopeptidase with a Zn-dependent proteolytic activity and substrate cleavage upstream of hydrophobic residues. Positive regulator of senescence, probably by degrading CCD4, thus participating in the controlled removal of carotenoids from the thylakoid membrane during the senescence process. In Arabidopsis thaliana (Mouse-ear cress), this protein is Plastoglobule-localized metallopeptidase 48, chloroplastic.